The primary structure comprises 302 residues: MSAVKAARYGKDNVRVYKVHKDEKTGVQTVYEMTVCVLLEGEIETSYTKADNSVIVATDSIKNTIYITAKQNPVTPPELFGSILGTHFIEKYNHIHAAHVNIVCHRWTRMDIDGKPHPHSFIRDSEEKRNVQVDVVEGKGIDIKSSLSGLTVLKSTNSQFWGFLRDEYTTLKETWDRILSTDVDATWQWKNFSGLQEVRSHVPKFDATWATAREVTLKTFAEDNSASVQATMYKMAEQILARQQLIETVEYSLPNKHYFEIDLSWHKGLQNTGKNAEVFAPQSDPNGLIKCTVGRSSLKSKL.

Ser2 carries the post-translational modification N-acetylserine. Active-site charge relay system residues include Lys11 and Thr58. The 5-hydroxyisourate site is built by Thr58, Asp59, Phe160, Arg177, Val228, Gln229, and Asn255. Thr58 contributes to the O2 binding site. Residues Thr58, Asp59, Phe160, Arg177, Val228, Gln229, and Asn255 each coordinate urate. Asn255 is a binding site for O2. Residue His257 is the Charge relay system of the active site. The short motif at 300 to 302 (SKL) is the Microbody targeting signal element.

This sequence belongs to the uricase family. In terms of assembly, homotetramer.

The protein localises to the peroxisome. It catalyses the reaction urate + O2 + H2O = 5-hydroxyisourate + H2O2. Its pathway is purine metabolism; urate degradation; (S)-allantoin from urate: step 1/3. 8-Azaxanthine is one of the most potent competitive inhibitors of uricase activity. Hypoxanthine has only a small inhibitor effect, and caffeine has no effect at all. Azide not only competes with dioxygen but also competes with the substrate for its enzymatic site. Urate oxidase is a cofactorless enzyme involved in the metabolism of purines. Catalyzes, in the presence of molecular oxygen, the hydroxylation of uric acid to metastable 5-hydroxyisourate (5-HIU) which is further degraded to allantoin. This chain is Uricase, found in Aspergillus flavus.